The sequence spans 348 residues: Photosystem II protein D1 (348 aa).

The next 3 helical transmembrane spans lie at 33-50 (YIGWFGILMFPLLVLATV), 122-137 (HFIFGAGAYMGREWEF), and 146-160 (WIFVAFSAPLVAASA). His-122 provides a ligand contact to chlorophyll a. Tyr-130 serves as a coordination point for pheophytin a. [CaMn4O5] cluster-binding residues include Asp-174 and Glu-193. The helical transmembrane segment at 201-222 (FHILGVAAVFGGSLFSAMHGSL) threads the bilayer. Residue His-202 participates in chlorophyll a binding. A quinone contacts are provided by residues His-219 and 268–269 (SF). Fe cation is bound at residue His-219. His-276 is a Fe cation binding site. The chain crosses the membrane as a helical span at residues 278 to 292 (FLAAWPVIGIWFTSL). Positions 336, 337, 346, and 348 each coordinate [CaMn4O5] cluster.

It belongs to the reaction center PufL/M/PsbA/D family. As to quaternary structure, PSII is composed of 1 copy each of membrane proteins PsbA, PsbB, PsbC, PsbD, PsbE, PsbF, PsbH, PsbI, PsbJ, PsbK, PsbL, PsbM, PsbT, PsbX, PsbY, PsbZ, Psb30/Ycf12, at least 3 peripheral proteins of the oxygen-evolving complex and a large number of cofactors. It forms dimeric complexes. Requires The D1/D2 heterodimer binds P680, chlorophylls that are the primary electron donor of PSII, and subsequent electron acceptors. It shares a non-heme iron and each subunit binds pheophytin, quinone, additional chlorophylls, carotenoids and lipids. D1 provides most of the ligands for the Mn4-Ca-O5 cluster of the oxygen-evolving complex (OEC). There is also a Cl(-1) ion associated with D1 and D2, which is required for oxygen evolution. The PSII complex binds additional chlorophylls, carotenoids and specific lipids. as cofactor. Post-translationally, tyr-165 forms a radical intermediate that is referred to as redox-active TyrZ, YZ or Y-Z.

It is found in the plastid. The protein localises to the chloroplast thylakoid membrane. The catalysed reaction is 2 a plastoquinone + 4 hnu + 2 H2O = 2 a plastoquinol + O2. Its function is as follows. Photosystem II (PSII) is a light-driven water:plastoquinone oxidoreductase that uses light energy to abstract electrons from H(2)O, generating O(2) and a proton gradient subsequently used for ATP formation. It consists of a core antenna complex that captures photons, and an electron transfer chain that converts photonic excitation into a charge separation. The D1/D2 (PsbA/PsbD) reaction center heterodimer binds P680, the primary electron donor of PSII as well as several subsequent electron acceptors. This Heterocapsa triquetra (Dinoflagellate) protein is Photosystem II protein D1.